Reading from the N-terminus, the 372-residue chain is tRNA-specific 2-thiouridylase MnmA (372 aa).

Residues 16–23 (GMSGGVDS) and Met-42 contribute to the ATP site. The interval 102–104 (NPD) is interaction with target base in tRNA. The active-site Nucleophile is the Cys-107. Cys-107 and Cys-205 form a disulfide bridge. Residue Gly-132 participates in ATP binding. Residues 155–157 (KDQ) form an interaction with tRNA region. Cys-205 functions as the Cysteine persulfide intermediate in the catalytic mechanism. Residues 317 to 318 (RY) form an interaction with tRNA region.

The protein belongs to the MnmA/TRMU family.

Its subcellular location is the cytoplasm. The catalysed reaction is S-sulfanyl-L-cysteinyl-[protein] + uridine(34) in tRNA + AH2 + ATP = 2-thiouridine(34) in tRNA + L-cysteinyl-[protein] + A + AMP + diphosphate + H(+). Catalyzes the 2-thiolation of uridine at the wobble position (U34) of tRNA, leading to the formation of s(2)U34. In Shewanella sp. (strain W3-18-1), this protein is tRNA-specific 2-thiouridylase MnmA.